Here is a 293-residue protein sequence, read N- to C-terminus: MTENNDIKMVIITGMSGAGKTVALQSFEDLGYFCVDNLPPMLLPKFVELMADSKSKMNKVALGIDLRGREFFEHLWGALDDLSERTWIIPHILFLDAKDSTLVTRYKETRRSHPLAPTGLPLKGIEAERGLLTDMKARANIVLDTSDLKPKELREKIVQLFSTETEQAFRVNVMSFGFKYGIPIDADLVFDVRFLPNPYYIPHMKPLTGLDEEVSSYVLKFNETHKFLEKLTDLITFMLPHYKREGKSQLVIAIGCTGGQHRSVTLAEYLGKHLKPDYSVHVSHRDVEKRKGH.

Position 14–21 (14–21 (GMSGAGKT)) interacts with ATP. 65-68 (DLRG) provides a ligand contact to GTP.

The protein belongs to the RapZ-like family.

Its function is as follows. Displays ATPase and GTPase activities. This Bacillus cytotoxicus (strain DSM 22905 / CIP 110041 / 391-98 / NVH 391-98) protein is Nucleotide-binding protein Bcer98_3698.